Consider the following 233-residue polypeptide: Small ribosomal subunit protein uS2 (233 aa).

It belongs to the universal ribosomal protein uS2 family.

The sequence is that of Small ribosomal subunit protein uS2 from Clostridium botulinum (strain Eklund 17B / Type B).